Reading from the N-terminus, the 61-residue chain is U-scoloptoxin(14)-Sm1a (61 aa).

An N-terminal signal peptide occupies residues 1–24 (MNPKLCMLLLVCLMAFYVIETVQA).

This sequence belongs to the scoloptoxin-14 family. Contains 4 disulfide bonds. In terms of tissue distribution, expressed by the venom gland.

The protein localises to the secreted. The chain is U-scoloptoxin(14)-Sm1a from Scolopendra morsitans (Tanzanian blue ringleg centipede).